Consider the following 887-residue polypeptide: Pyruvate, phosphate dikinase 2 (887 aa).

Position 467 is a phosphothreonine; by PDRP1 (Thr467). The Tele-phosphohistidine intermediate role is filled by His469. The substrate site is built by Arg575, Arg632, Glu761, Gly782, Thr783, Asn784, and Asp785. Glu761 contributes to the Mg(2+) binding site. Asp785 contacts Mg(2+). The Proton donor role is filled by Cys847.

The protein belongs to the PEP-utilizing enzyme family. The cofactor is Mg(2+).

Its subcellular location is the cytoplasm. It carries out the reaction pyruvate + phosphate + ATP = phosphoenolpyruvate + AMP + diphosphate + H(+). Formation of phosphoenolpyruvate. The chain is Pyruvate, phosphate dikinase 2 (PPDK2) from Oryza sativa subsp. japonica (Rice).